We begin with the raw amino-acid sequence, 713 residues long: U3 small nucleolar RNA-associated protein 8 (713 aa).

At Thr-95 the chain carries Phosphothreonine. A phosphoserine mark is found at Ser-148 and Ser-150.

Interacts with snoRNA U3. Interacts with MPP10 and UTP25. Component of the ribosomal small subunit (SSU) processome composed of at least 40 protein subunits and snoRNA U3. In the absence of snoRNA3, forms a complex with other t-UTPs. This complex can associate with pre-18S ribosomal RNAs.

The protein localises to the nucleus. The protein resides in the nucleolus. Functionally, involved in nucleolar processing of pre-18S ribosomal RNA. Also has a role in nuclear tRNA export. It acts between the steps of tRNA maturation/aminoacylation and its subsequent translocation out of the nucleus. Required for optimal pre-ribosomal RNA transcription by RNA polymerase I together with a subset of U3 proteins required for transcription (t-UTPs). This is U3 small nucleolar RNA-associated protein 8 (UTP8) from Saccharomyces cerevisiae (strain ATCC 204508 / S288c) (Baker's yeast).